The sequence spans 414 residues: Histidine--tRNA ligase (414 aa).

The protein belongs to the class-II aminoacyl-tRNA synthetase family. Homodimer.

Its subcellular location is the cytoplasm. The catalysed reaction is tRNA(His) + L-histidine + ATP = L-histidyl-tRNA(His) + AMP + diphosphate + H(+). This Rickettsia conorii (strain ATCC VR-613 / Malish 7) protein is Histidine--tRNA ligase.